Here is a 233-residue protein sequence, read N- to C-terminus: Forkhead box protein L3 (233 aa).

The segment at residues 32–130 (RPAYSYIALI…ENGNYRRRRR (99 aa)) is a DNA-binding region (fork-head). Residues 125-134 (YRRRRRRRGP) show a composition bias toward basic residues. The tract at residues 125 to 198 (YRRRRRRRGP…PRDLKFSIDY (74 aa)) is disordered. A compositionally biased stretch (pro residues) spans 175–184 (REPPASPAPP). Basic and acidic residues predominate over residues 185-194 (GKEHPRDLKF).

Its subcellular location is the nucleus. Probable transcriptional regulator. The sequence is that of Forkhead box protein L3 from Homo sapiens (Human).